The chain runs to 88 residues: Small ribosomal subunit protein bS20 (88 aa).

The segment covering 1–22 has biased composition (basic residues); sequence MANIKSSKKRSIQSEKKRKYNS. The interval 1–26 is disordered; it reads MANIKSSKKRSIQSEKKRKYNSSKKS.

This sequence belongs to the bacterial ribosomal protein bS20 family.

Functionally, binds directly to 16S ribosomal RNA. In Wigglesworthia glossinidia brevipalpis, this protein is Small ribosomal subunit protein bS20.